Consider the following 414-residue polypeptide: MRSWPAPEVPNLPEAGLPGPALPLHLHDTATGTVRPTRPGPTARMYVCGITPYDATHLGHAATYLAFDLVNRVWRDGGHKVCYVQNVTDVDDPLLERAEQTGQDWRELADREIALFRDDMTALRILPPDHYVGAVEAIPLIVEMIERLRSRGAVYEVNGDLYFPISADPDFGRVSGLTTEQMLPLFAERGGDPQRRGKKDPLDALLWRAQRPGEPSWESPFGPGRPGWHVECSAISIHHLGMAFDVEGGGSDLAFPHHEMSASHAQVATGRHPHAKAYVHTGMVGLDGQKMSKSLGNLVFVSRLRADGADPMAVRLALLAHHYRSDWEWTGEDLPRATARLERWRAAVQLPAGPPAAAVAAEVRRHLSQDLDAPSALVTVDRWAEQALAGAGERDPAAPAQVRAVVDALLGVAL.

The tract at residues 1–38 (MRSWPAPEVPNLPEAGLPGPALPLHLHDTATGTVRPTR) is disordered. Residues 11–38 (NLPEAGLPGPALPLHLHDTATGTVRPTR) show a composition bias toward low complexity. C48 contributes to the Zn(2+) binding site. L-cysteinyl-5'-AMP is bound by residues 48-51 (CGIT), T63, and 86-88 (NVT). A 'HIGH' region motif is present at residues 50 to 60 (ITPYDATHLGH). The 'ERGGDP' region motif lies at 188 to 193 (ERGGDP). W228 serves as a coordination point for L-cysteinyl-5'-AMP. Zn(2+) is bound at residue C232. 250–252 (GSD) contacts L-cysteinyl-5'-AMP. H257 contributes to the Zn(2+) binding site. Residue V284 coordinates L-cysteinyl-5'-AMP. Positions 290-294 (KMSKS) match the 'KMSKS' region motif.

Belongs to the class-I aminoacyl-tRNA synthetase family. MshC subfamily. In terms of assembly, monomer. Zn(2+) is required as a cofactor.

The catalysed reaction is 1D-myo-inositol 2-amino-2-deoxy-alpha-D-glucopyranoside + L-cysteine + ATP = 1D-myo-inositol 2-(L-cysteinylamino)-2-deoxy-alpha-D-glucopyranoside + AMP + diphosphate + H(+). In terms of biological role, catalyzes the ATP-dependent condensation of GlcN-Ins and L-cysteine to form L-Cys-GlcN-Ins. The sequence is that of L-cysteine:1D-myo-inositol 2-amino-2-deoxy-alpha-D-glucopyranoside ligase from Thermomonospora curvata (strain ATCC 19995 / DSM 43183 / JCM 3096 / KCTC 9072 / NBRC 15933 / NCIMB 10081 / Henssen B9).